The primary structure comprises 379 residues: MAWRGWAQRGWGCGQAWAASVGGRSCEELTAALTPPRLLGRRFNFFIQQKCGFRKAPRKVEPRRSDTGTSGEAYKRSALIPPVEETVFYPSPYPIRSLIKPLFFTVGFTGCAFGSAAIWQYESLKSRVQSYFDGIKADWLDSIRPQKEGDFRKEINKWWNNLSDGQRTVTGIIAANVLVFCLWRVPSLQRTMIRYFTSNPASKVLCSPMLLSTFSHFSLFHMAANMYVLWSFSSSIVNILGQEQFMAVYLSAGVISNFVSYVGKVATGRYGPSLGASGAIMTVLAAVCTKIPEGRLAIIFLPMFTFTAGNALKAIIAMDTAGMILGWKFFDHAAHLGGALFGIWYVTYGHELIWKNREPLVKIWHEIRTNGPKKGGGSK.

The N-terminal 52 residues, methionine 1–glycine 52, are a transit peptide targeting the mitochondrion. Topologically, residues phenylalanine 53–proline 101 are mitochondrial matrix. Serine 65 is subject to Phosphoserine. Residue threonine 69 is modified to Phosphothreonine. Serine 70 bears the Phosphoserine mark. Residues leucine 102 to tyrosine 121 traverse the membrane as a helical segment. The Mitochondrial intermembrane portion of the chain corresponds to glutamate 122 to arginine 167. Residues threonine 168 to serine 187 traverse the membrane as a helical segment. Residues leucine 188–serine 207 are Mitochondrial matrix-facing. A helical membrane pass occupies residues proline 208–tryptophan 230. The Mitochondrial intermembrane portion of the chain corresponds to serine 231–glutamine 244. Residues phenylalanine 245 to valine 262 form a helical membrane-spanning segment. At glycine 263–serine 273 the chain is on the mitochondrial matrix side. A helical membrane pass occupies residues leucine 274–proline 292. Serine 277 serves as the catalytic Nucleophile. At glutamate 293–arginine 295 the chain is on the mitochondrial intermembrane side. Residues leucine 296 to methionine 318 form a helical membrane-spanning segment. The Mitochondrial matrix segment spans residues aspartate 319 to histidine 332. A helical membrane pass occupies residues alanine 333–tryptophan 354. Histidine 335 is a catalytic residue. The Mitochondrial intermembrane portion of the chain corresponds to lysine 355–lysine 379.

Belongs to the peptidase S54 family. As to quaternary structure, interacts with PSEN1 and PSEN2. Binds OPA1. In terms of processing, P-beta is proteolytically processed (beta-cleavage) in a PARL-dependent manner.

It localises to the mitochondrion inner membrane. It is found in the nucleus. The enzyme catalyses Cleaves type-1 transmembrane domains using a catalytic dyad composed of serine and histidine that are contributed by different transmembrane domains.. In terms of biological role, required for the control of apoptosis during postnatal growth. Essential for proteolytic processing of an antiapoptotic form of OPA1 which prevents the release of mitochondrial cytochrome c in response to intrinsic apoptotic signals. Required for the maturation of PINK1 into its 52kDa mature form after its cleavage by mitochondrial-processing peptidase (MPP). Promotes cleavage of serine/threonine-protein phosphatase PGAM5 in damaged mitochondria in response to loss of mitochondrial membrane potential. Mediates differential cleavage of PINK1 and PGAM5 depending on the health status of mitochondria, disassociating from PINK1 and associating with PGAM5 in response to mitochondrial membrane potential loss. Required for processing of CLPB into a form with higher protein disaggregase activity by removing an autoinhibitory N-terminal peptide. Promotes processing of DIABLO/SMAC in the mitochondrion which is required for DIABLO apoptotic activity. Also required for cleavage of STARD7 and TTC19. Promotes changes in mitochondria morphology regulated by phosphorylation of P-beta domain. This is Presenilin-associated rhomboid-like protein, mitochondrial (PARL) from Pongo abelii (Sumatran orangutan).